Reading from the N-terminus, the 365-residue chain is 2-aminoethylphosphonate--pyruvate transaminase (365 aa).

N6-(pyridoxal phosphate)lysine is present on Lys-194.

Belongs to the class-V pyridoxal-phosphate-dependent aminotransferase family. PhnW subfamily. In terms of assembly, homodimer. It depends on pyridoxal 5'-phosphate as a cofactor.

It carries out the reaction (2-aminoethyl)phosphonate + pyruvate = phosphonoacetaldehyde + L-alanine. Functionally, involved in phosphonate degradation. The polypeptide is 2-aminoethylphosphonate--pyruvate transaminase (Bacillus cytotoxicus (strain DSM 22905 / CIP 110041 / 391-98 / NVH 391-98)).